The chain runs to 129 residues: Transcription antitermination protein NusB (129 aa).

The protein belongs to the NusB family.

Functionally, involved in transcription antitermination. Required for transcription of ribosomal RNA (rRNA) genes. Binds specifically to the boxA antiterminator sequence of the ribosomal RNA (rrn) operons. This chain is Transcription antitermination protein NusB, found in Staphylococcus epidermidis (strain ATCC 35984 / DSM 28319 / BCRC 17069 / CCUG 31568 / BM 3577 / RP62A).